Reading from the N-terminus, the 822-residue chain is AP-1 complex subunit gamma-1 (822 aa).

Polar residues predominate over residues 593 to 604 (NGPSEIVQTNGE). The segment at 593-627 (NGPSEIVQTNGETEPAPLETKPPPSGPQPTSQAND) is disordered. The region spanning 702-817 (PGIPSITAYS…QDLAEVNNFP (116 aa)) is the GAE domain.

It belongs to the adaptor complexes large subunit family. In terms of assembly, adaptor protein complex 1 (AP-1) is a heterotetramer composed of two large adaptins (gamma-type subunit AP1G1 and beta-type subunit AP1B1), a medium adaptin (mu-type subunit AP1M1 or AP1M2) and a small adaptin (sigma-type subunit AP1S1 or AP1S2 or AP1S3). Interacts (via GAE domain) with RABEP1. Interacts with EPS15. Interacts with SYNRG/gamma-synergin. Interacts (via GAE domain) with AP1AR (via coiled-coil domain). Interacts with CLN3 (via dileucine motif); this interaction facilitates lysosomal targeting. Interacts (via GAE domain) with AFTPH/aftiphilin; the interaction is required to recruit AFTPH/aftiphilin to the perinuclear region of the cell. As to expression, widely expressed.

It localises to the golgi apparatus. The protein resides in the cytoplasmic vesicle. Its subcellular location is the clathrin-coated vesicle membrane. It is found in the cytoplasm. The protein localises to the perinuclear region. It localises to the clathrin-coated vesicle. The protein resides in the membrane. Its subcellular location is the clathrin-coated pit. Subunit of clathrin-associated adaptor protein complex 1 that plays a role in protein sorting in the late-Golgi/trans-Golgi network (TGN) and/or endosomes. The AP complexes mediate both the recruitment of clathrin to membranes and the recognition of sorting signals within the cytosolic tails of transmembrane cargo molecules. In association with AFTPH/aftiphilin in the aftiphilin/p200/gamma-synergin complex, involved in the trafficking of transferrin from early to recycling endosomes, and the membrane trafficking of furin and the lysosomal enzyme cathepsin D between the trans-Golgi network (TGN) and endosomes. This is AP-1 complex subunit gamma-1 (Ap1g1) from Mus musculus (Mouse).